Consider the following 436-residue polypeptide: Glutamyl-tRNA reductase (436 aa).

Substrate contacts are provided by residues 49–52 (TCNR), serine 109, 114–116 (EGQ), and glutamine 120. Cysteine 50 acts as the Nucleophile in catalysis. 198-203 (GAGRMS) lines the NADP(+) pocket.

This sequence belongs to the glutamyl-tRNA reductase family. As to quaternary structure, homodimer.

It carries out the reaction (S)-4-amino-5-oxopentanoate + tRNA(Glu) + NADP(+) = L-glutamyl-tRNA(Glu) + NADPH + H(+). The protein operates within porphyrin-containing compound metabolism; protoporphyrin-IX biosynthesis; 5-aminolevulinate from L-glutamyl-tRNA(Glu): step 1/2. Its pathway is porphyrin-containing compound metabolism; chlorophyll biosynthesis. Functionally, catalyzes the NADPH-dependent reduction of glutamyl-tRNA(Glu) to glutamate 1-semialdehyde (GSA). This chain is Glutamyl-tRNA reductase, found in Prochlorococcus marinus (strain MIT 9312).